We begin with the raw amino-acid sequence, 426 residues long: Phosphomethylpyrimidine synthase (426 aa).

Substrate is bound by residues N65, M94, Y123, H162, 184–186, 225–228, and E264; these read SRG and DGMR. Residue H268 coordinates Zn(2+). Y291 contributes to the substrate binding site. Zn(2+) is bound at residue H332. Positions 408, 411, and 415 each coordinate [4Fe-4S] cluster.

This sequence belongs to the ThiC family. Requires [4Fe-4S] cluster as cofactor.

The catalysed reaction is 5-amino-1-(5-phospho-beta-D-ribosyl)imidazole + S-adenosyl-L-methionine = 4-amino-2-methyl-5-(phosphooxymethyl)pyrimidine + CO + 5'-deoxyadenosine + formate + L-methionine + 3 H(+). It functions in the pathway cofactor biosynthesis; thiamine diphosphate biosynthesis. In terms of biological role, catalyzes the synthesis of the hydroxymethylpyrimidine phosphate (HMP-P) moiety of thiamine from aminoimidazole ribotide (AIR) in a radical S-adenosyl-L-methionine (SAM)-dependent reaction. This chain is Phosphomethylpyrimidine synthase, found in Methanococcus vannielii (strain ATCC 35089 / DSM 1224 / JCM 13029 / OCM 148 / SB).